The chain runs to 119 residues: Immunoglobulin lambda variable 4-69 (119 aa).

Residues 1 to 20 (MAWTPLLFLTLLLHCTGSLS) form the signal peptide. A framework-1 region spans residues 21 to 45 (QLVLTQSPSASASLGASVKLTCTLS). The Ig-like domain occupies 21 to 119 (QLVLTQSPSA…YYCQTWGTGI (99 aa)). A disulfide bond links C42 and C112. The segment at 46–52 (SGHSSYA) is complementarity-determining-1. Residues 53–69 (IAWHQQQPEKGPRYLMK) form a framework-2 region. Residues 70–76 (LNSDGSH) are complementarity-determining-2. The interval 73 to 92 (DGSHSKGDGIPDRFSGSSSG) is disordered. A framework-3 region spans residues 77–112 (SKGDGIPDRFSGSSSGAERYLTISSLQSEDEADYYC). The interval 113 to 119 (QTWGTGI) is complementarity-determining-3.

Immunoglobulins are composed of two identical heavy chains and two identical light chains; disulfide-linked.

The protein localises to the secreted. It is found in the cell membrane. V region of the variable domain of immunoglobulin light chains that participates in the antigen recognition. Immunoglobulins, also known as antibodies, are membrane-bound or secreted glycoproteins produced by B lymphocytes. In the recognition phase of humoral immunity, the membrane-bound immunoglobulins serve as receptors which, upon binding of a specific antigen, trigger the clonal expansion and differentiation of B lymphocytes into immunoglobulins-secreting plasma cells. Secreted immunoglobulins mediate the effector phase of humoral immunity, which results in the elimination of bound antigens. The antigen binding site is formed by the variable domain of one heavy chain, together with that of its associated light chain. Thus, each immunoglobulin has two antigen binding sites with remarkable affinity for a particular antigen. The variable domains are assembled by a process called V-(D)-J rearrangement and can then be subjected to somatic hypermutations which, after exposure to antigen and selection, allow affinity maturation for a particular antigen. The sequence is that of Immunoglobulin lambda variable 4-69 from Homo sapiens (Human).